The primary structure comprises 126 residues: Large ribosomal subunit protein bL12 (126 aa).

This sequence belongs to the bacterial ribosomal protein bL12 family. As to quaternary structure, homodimer. Part of the ribosomal stalk of the 50S ribosomal subunit. Forms a multimeric L10(L12)X complex, where L10 forms an elongated spine to which 2 to 4 L12 dimers bind in a sequential fashion. Binds GTP-bound translation factors.

Forms part of the ribosomal stalk which helps the ribosome interact with GTP-bound translation factors. Is thus essential for accurate translation. In Bifidobacterium longum subsp. infantis (strain ATCC 15697 / DSM 20088 / JCM 1222 / NCTC 11817 / S12), this protein is Large ribosomal subunit protein bL12.